The following is a 62-amino-acid chain: MRCLPVFVILLLLIASAPSVDAQPKTKDDVPLAPLHDNIRSTLQTLRKKVCCRPVQDCCSGK.

A signal peptide spans 1-22; it reads MRCLPVFVILLLLIASAPSVDA. A propeptide spanning residues 23–49 is cleaved from the precursor; the sequence is QPKTKDDVPLAPLHDNIRSTLQTLRKK. Position 60 is a serine amide (Ser60).

This sequence belongs to the conotoxin T superfamily. In terms of processing, contains 2 disulfide bonds that can be either 'C1-C3, C2-C4' or 'C1-C4, C2-C3', since these disulfide connectivities have been observed for conotoxins with cysteine framework V (for examples, see AC P0DQQ7 and AC P81755). In terms of tissue distribution, expressed by the venom duct.

It localises to the secreted. The protein is Conotoxin Gm5.2 of Conus gloriamaris (Glory-of-the-Sea cone).